A 273-amino-acid polypeptide reads, in one-letter code: Nickel import ATP-binding protein NikE (273 aa).

The 240-residue stretch at 13 to 252 (YRTGGLLRKR…AHPVGRQLQA (240 aa)) folds into the ABC transporter domain. 45–52 (GSSGSGKS) is a binding site for ATP.

It belongs to the ABC transporter superfamily. Nickel importer (TC 3.A.1.5.3) family. The complex is composed of two ATP-binding proteins (NikD and NikE), two transmembrane proteins (NikB and NikC) and a solute-binding protein (NikA).

Its subcellular location is the cell inner membrane. The enzyme catalyses Ni(2+)(out) + ATP + H2O = Ni(2+)(in) + ADP + phosphate + H(+). Functionally, part of the ABC transporter complex NikABCDE involved in nickel import. Responsible for energy coupling to the transport system. The sequence is that of Nickel import ATP-binding protein NikE from Pseudomonas putida (strain ATCC 47054 / DSM 6125 / CFBP 8728 / NCIMB 11950 / KT2440).